Consider the following 451-residue polypeptide: Eukaryotic translation initiation factor 3 subunit E (451 aa).

Positions 256-425 (TDLFFSPAYI…GTVIMNHPPQ (170 aa)) constitute a PCI domain.

Belongs to the eIF-3 subunit E family. Component of the eukaryotic translation initiation factor 3 (eIF-3) complex.

The protein localises to the cytoplasm. In terms of biological role, component of the eukaryotic translation initiation factor 3 (eIF-3) complex, which is involved in protein synthesis of a specialized repertoire of mRNAs and, together with other initiation factors, stimulates binding of mRNA and methionyl-tRNAi to the 40S ribosome. The eIF-3 complex specifically targets and initiates translation of a subset of mRNAs involved in cell proliferation. The protein is Eukaryotic translation initiation factor 3 subunit E (int6) of Aspergillus fumigatus (strain CBS 144.89 / FGSC A1163 / CEA10) (Neosartorya fumigata).